Here is a 305-residue protein sequence, read N- to C-terminus: Aquaporin NIP6-1 (305 aa).

Residues 1 to 30 (MDHEEIPSTPSTPATTPGTPGAPLFGGFEG) form a disordered region. Residues 7–23 (PSTPSTPATTPGTPGAP) are compositionally biased toward low complexity. A run of 2 helical transmembrane segments spans residues 82-102 (LGAE…TAIV) and 111-131 (TLIG…LSTG). Residues 139–141 (NPA) carry the NPA 1 motif. 3 helical membrane-spanning segments follow: residues 159 to 179 (VYIG…KAVF), 194 to 214 (LSQA…VVTA), and 221 to 241 (AVGE…ILIA). Residues 250 to 252 (NPV) carry the NPA 2 motif. Residues 267-287 (IWVYLTAPILGALIGAGTYTI) traverse the membrane as a helical segment. Residue Ser302 is modified to Phosphoserine.

The protein belongs to the MIP/aquaporin (TC 1.A.8) family. NIP (TC 1.A.8.12) subfamily. As to expression, expressed in roots.

The protein resides in the membrane. Functionally, transports glycerol, urea and formamide, in Xenopus laevis oocytes. Very low water transport activity. This Arabidopsis thaliana (Mouse-ear cress) protein is Aquaporin NIP6-1 (NIP6-1).